The following is a 137-amino-acid chain: MLSPRKVKFRKWQKGRNKGVATRGATVAFGDIGLKAIEHGKLTSQQIEAARIAMMRHIKRGGKVWIRIFPDRPVTAKPLETRQGSGKGSPVGWCAPVKPGRVLYEIKGVSLELAKEALTRAAHKLPVKTVIVVREGV.

The protein belongs to the universal ribosomal protein uL16 family. As to quaternary structure, part of the 50S ribosomal subunit.

In terms of biological role, binds 23S rRNA and is also seen to make contacts with the A and possibly P site tRNAs. The chain is Large ribosomal subunit protein uL16 from Nitratidesulfovibrio vulgaris (strain ATCC 29579 / DSM 644 / CCUG 34227 / NCIMB 8303 / VKM B-1760 / Hildenborough) (Desulfovibrio vulgaris).